We begin with the raw amino-acid sequence, 157 residues long: SsrA-binding protein (157 aa).

The tract at residues 132-157 (VHDKRQAQKDKDWAREKDRLFKKAYK) is disordered. The segment covering 135–157 (KRQAQKDKDWAREKDRLFKKAYK) has biased composition (basic and acidic residues).

Belongs to the SmpB family.

Its subcellular location is the cytoplasm. In terms of biological role, required for rescue of stalled ribosomes mediated by trans-translation. Binds to transfer-messenger RNA (tmRNA), required for stable association of tmRNA with ribosomes. tmRNA and SmpB together mimic tRNA shape, replacing the anticodon stem-loop with SmpB. tmRNA is encoded by the ssrA gene; the 2 termini fold to resemble tRNA(Ala) and it encodes a 'tag peptide', a short internal open reading frame. During trans-translation Ala-aminoacylated tmRNA acts like a tRNA, entering the A-site of stalled ribosomes, displacing the stalled mRNA. The ribosome then switches to translate the ORF on the tmRNA; the nascent peptide is terminated with the 'tag peptide' encoded by the tmRNA and targeted for degradation. The ribosome is freed to recommence translation, which seems to be the essential function of trans-translation. In Francisella tularensis subsp. tularensis (strain FSC 198), this protein is SsrA-binding protein.